We begin with the raw amino-acid sequence, 126 residues long: Holo-[acyl-carrier-protein] synthase (126 aa).

Mg(2+)-binding residues include Asp9 and Glu58.

This sequence belongs to the P-Pant transferase superfamily. AcpS family. It depends on Mg(2+) as a cofactor.

The protein localises to the cytoplasm. It carries out the reaction apo-[ACP] + CoA = holo-[ACP] + adenosine 3',5'-bisphosphate + H(+). Functionally, transfers the 4'-phosphopantetheine moiety from coenzyme A to a Ser of acyl-carrier-protein. This Photobacterium profundum (strain SS9) protein is Holo-[acyl-carrier-protein] synthase.